Here is a 194-residue protein sequence, read N- to C-terminus: Putative manganese efflux pump MntP (194 aa).

The next 6 helical transmembrane spans lie at 3-23 (PITI…AAIG), 37-57 (LYVA…GWLL), 65-85 (IATF…IHMI), 112-132 (LAAT…SLAF), 139-159 (IVAA…VMLG), and 170-190 (AEIV…YEHL).

Belongs to the MntP (TC 9.B.29) family.

The protein localises to the cell inner membrane. Functionally, probably functions as a manganese efflux pump. This is Putative manganese efflux pump MntP from Xylella fastidiosa (strain 9a5c).